A 366-amino-acid polypeptide reads, in one-letter code: Ribosomal RNA large subunit methyltransferase M (366 aa).

Residues S188, 221-224 (CPGG), D240, D260, and D277 each bind S-adenosyl-L-methionine. The active-site Proton acceptor is the K306.

It belongs to the class I-like SAM-binding methyltransferase superfamily. RNA methyltransferase RlmE family. RlmM subfamily. As to quaternary structure, monomer.

Its subcellular location is the cytoplasm. It catalyses the reaction cytidine(2498) in 23S rRNA + S-adenosyl-L-methionine = 2'-O-methylcytidine(2498) in 23S rRNA + S-adenosyl-L-homocysteine + H(+). Functionally, catalyzes the 2'-O-methylation at nucleotide C2498 in 23S rRNA. In Salmonella dublin (strain CT_02021853), this protein is Ribosomal RNA large subunit methyltransferase M.